The following is a 340-amino-acid chain: 4-hydroxy-2-oxovalerate aldolase (340 aa).

One can recognise a Pyruvate carboxyltransferase domain in the interval 5–255 (IVITEVALRD…QTGVDLYKMM (251 aa)). Substrate is bound at residue 13 to 14 (RD). Aspartate 14 serves as a coordination point for Mn(2+). Histidine 17 functions as the Proton acceptor in the catalytic mechanism. The substrate site is built by serine 167 and histidine 194. Residues histidine 194 and histidine 196 each contribute to the Mn(2+) site. Tyrosine 285 provides a ligand contact to substrate.

The protein belongs to the 4-hydroxy-2-oxovalerate aldolase family.

It carries out the reaction (S)-4-hydroxy-2-oxopentanoate = acetaldehyde + pyruvate. The chain is 4-hydroxy-2-oxovalerate aldolase from Brevibacillus brevis (strain 47 / JCM 6285 / NBRC 100599).